Consider the following 185-residue polypeptide: Sulfopyruvate decarboxylase subunit beta (185 aa).

This sequence belongs to the TPP enzyme family. As to quaternary structure, heterododecamer composed of 6 subunits alpha and 6 subunits beta. Thiamine diphosphate serves as cofactor.

It carries out the reaction 3-sulfopyruvate + H(+) = sulfoacetaldehyde + CO2. It participates in cofactor biosynthesis; coenzyme M biosynthesis; sulfoacetaldehyde from phosphoenolpyruvate and sulfite: step 4/4. Involved in the biosynthesis of the coenzyme M (2-mercaptoethanesulfonic acid). Catalyzes the decarboxylation of sulfopyruvate to sulfoacetaldehyde. The polypeptide is Sulfopyruvate decarboxylase subunit beta (Methanothermobacter thermautotrophicus (strain ATCC 29096 / DSM 1053 / JCM 10044 / NBRC 100330 / Delta H) (Methanobacterium thermoautotrophicum)).